A 158-amino-acid chain; its full sequence is Small ribosomal subunit protein uS9 (158 aa).

Belongs to the universal ribosomal protein uS9 family.

The polypeptide is Small ribosomal subunit protein uS9 (Brucella melitensis biotype 1 (strain ATCC 23456 / CCUG 17765 / NCTC 10094 / 16M)).